The primary structure comprises 945 residues: Endo-1,4-beta-xylanase 1 (945 aa).

The segment covering asparagine 16–lysine 41 has biased composition (basic and acidic residues). Positions asparagine 16–isoleucine 50 are disordered. CBM-cenC domains lie at asparagine 57 to serine 197, isoleucine 227 to proline 362, and asparagine 397 to serine 541. Residues asparagine 86, asparagine 239, asparagine 305, asparagine 349, asparagine 417, asparagine 453, and asparagine 687 are each glycosylated (N-linked (GlcNAc...) asparagine). A GH10 domain is found at serine 589–valine 884. Glutamate 718 (proton donor) is an active-site residue. Catalysis depends on glutamate 819, which acts as the Nucleophile.

Belongs to the glycosyl hydrolase 10 (cellulase F) family. Predominantly expressed in vascular bundles, but not in vessel cells. Mostly expressed in stems, at lower levels in roots, and weakly in inflorescences and seedlings.

It localises to the secreted. Its subcellular location is the cell wall. The catalysed reaction is Endohydrolysis of (1-&gt;4)-beta-D-xylosidic linkages in xylans.. It participates in glycan degradation; xylan degradation. Binds to and hydrolyzes insoluble and soluble xylan substrates. Exhibits xylanase activity. The protein is Endo-1,4-beta-xylanase 1 of Arabidopsis thaliana (Mouse-ear cress).